We begin with the raw amino-acid sequence, 110 residues long: Snake venom vascular endothelial growth factor toxin HF (110 aa).

Q1 is subject to Pyrrolidone carboxylic acid. 3 disulfides stabilise this stretch: C14–C56, C45–C91, and C49–C93.

Belongs to the PDGF/VEGF growth factor family. Snake venom VEGF subfamily. In terms of assembly, homodimer; disulfide-linked. Interacts with VEGF receptor-2 (KDR) with high affinity. In terms of tissue distribution, expressed by the venom gland.

The protein localises to the secreted. Snake venom VEGFs that may contribute to venom dispersion and prey subjugation by inducing vascular permeability and hypotension. This protein induces an increase in capillary permeability after intradermal injection, as well as a drastic hypotensive effect after intravenous injection. The hypotension is mediated by nitric oxide (NO), which is produced by VEGF-activated endothelium NO synthase. Also induces angiogenesis in vitro, probably through VEGF receptor (KDR/VEGFR-2) signaling. The chain is Snake venom vascular endothelial growth factor toxin HF from Vipera aspis aspis (Aspic viper).